A 129-amino-acid polypeptide reads, in one-letter code: Large ribosomal subunit protein bL12 (129 aa).

The protein belongs to the bacterial ribosomal protein bL12 family. In terms of assembly, homodimer. Part of the ribosomal stalk of the 50S ribosomal subunit. Forms a multimeric L10(L12)X complex, where L10 forms an elongated spine to which 2 to 4 L12 dimers bind in a sequential fashion. Binds GTP-bound translation factors.

Its function is as follows. Forms part of the ribosomal stalk which helps the ribosome interact with GTP-bound translation factors. Is thus essential for accurate translation. This chain is Large ribosomal subunit protein bL12, found in Fervidobacterium nodosum (strain ATCC 35602 / DSM 5306 / Rt17-B1).